The primary structure comprises 155 residues: RNA pyrophosphohydrolase (155 aa).

The region spanning 5-147 (KYRPNVAAII…KRQVYRQVIA (143 aa)) is the Nudix hydrolase domain. The short motif at 42–63 (GGIDEGETPLEALHRELLEEIG) is the Nudix box element.

Belongs to the Nudix hydrolase family. RppH subfamily. Requires a divalent metal cation as cofactor.

Its function is as follows. Accelerates the degradation of transcripts by removing pyrophosphate from the 5'-end of triphosphorylated RNA, leading to a more labile monophosphorylated state that can stimulate subsequent ribonuclease cleavage. The protein is RNA pyrophosphohydrolase of Helicobacter pylori (strain G27).